The chain runs to 271 residues: RELT-like protein 1 (271 aa).

The first 23 residues, methionine 1–serine 23, serve as a signal peptide directing secretion. Residues serine 24–glutamate 57 are Extracellular-facing. The interval valine 27 to glycine 52 is disordered. Residues proline 36–glycine 52 show a composition bias toward low complexity. The helical transmembrane segment at tyrosine 58 to cysteine 78 threads the bilayer. Over histidine 79 to glutamate 271 the chain is Cytoplasmic. 2 positions are modified to phosphoserine: serine 109 and serine 114. 2 disordered regions span residues cysteine 144–glycine 168 and threonine 231–glutamate 271. Residues proline 155–leucine 165 are compositionally biased toward pro residues. The segment covering threonine 231–serine 244 has biased composition (basic and acidic residues). Phosphoserine is present on residues serine 244 and serine 247.

This sequence belongs to the RELT family. Interacts with RELT, RELL2, OXSR1 and PLSCR1.

The protein localises to the cell membrane. Its function is as follows. Induces activation of MAPK14/p38 cascade, when overexpressed. Induces apoptosis, when overexpressed. This is RELT-like protein 1 (RELL1) from Bos taurus (Bovine).